Reading from the N-terminus, the 493-residue chain is Cobyric acid synthase (493 aa).

In terms of domain architecture, GATase cobBQ-type spans 252 to 443 (DLQITVVRLP…LHGLFDNGPW (192 aa)). Residue cysteine 333 is the Nucleophile of the active site. Histidine 435 is an active-site residue.

The protein belongs to the CobB/CobQ family. CobQ subfamily.

It participates in cofactor biosynthesis; adenosylcobalamin biosynthesis. Its function is as follows. Catalyzes amidations at positions B, D, E, and G on adenosylcobyrinic A,C-diamide. NH(2) groups are provided by glutamine, and one molecule of ATP is hydrogenolyzed for each amidation. The sequence is that of Cobyric acid synthase from Nostoc sp. (strain PCC 7120 / SAG 25.82 / UTEX 2576).